The sequence spans 527 residues: Putative adhesin P1-like protein MPN_500 (527 aa).

Disordered regions lie at residues 1 to 26 (MDDI…GSRS), 76 to 148 (GWRN…LTNY), 248 to 269 (ASGS…PEQS), and 468 to 527 (FGTD…VSGH). A compositionally biased stretch (low complexity) spans 9–26 (TSAGSSSGTSTNTSGSRS). A compositionally biased stretch (polar residues) spans 82–95 (TTSGSTGNANDTKF). Over residues 108–117 (SSGTNTSAGN) the composition is skewed to low complexity. Residues 128–148 (QNGQVKTSVQEATSGDNLTNY) are compositionally biased toward polar residues. Low complexity predominate over residues 248–262 (ASGSGSNTTSSPGIG). Over residues 468 to 495 (FGTDHSTQPQPQSLKTTTPVFGRSSGNL) the composition is skewed to polar residues. A compositionally biased stretch (gly residues) spans 500 to 513 (SGGGAGGGSSGSGQ).

It belongs to the adhesin P1 family.

The protein is Putative adhesin P1-like protein MPN_500 of Mycoplasma pneumoniae (strain ATCC 29342 / M129 / Subtype 1) (Mycoplasmoides pneumoniae).